A 248-amino-acid chain; its full sequence is Short-chain dehydrogenase/reductase iacG (248 aa).

Residues isoleucine 14, asparagine 35, lysine 41, aspartate 58, arginine 120, and valine 187 each coordinate NADP(+).

It belongs to the short-chain dehydrogenases/reductases (SDR) family.

It functions in the pathway secondary metabolite biosynthesis. Its function is as follows. Short-chain dehydrogenase/reductase; part of the gene cluster that mediates the biosynthesis of iso-A82775C, a enylepoxycyclohexane and biosynthetic precursor of the chloropestolide anticancer natural products. Within the cluster, the prenyltransferase iacE prenylates siccayne to generate pestalodiol E, using dimethylallyl diphosphate (DMAPP) as cosubstrate. The probable oxidoreductase iacF is then involved in the epoxidation of pestalodiol F to pestalodiol F, which is further converted to pestalofone A by the short-chain dehydrogenase/reductase iacG. Iso-A82775C is subsequently generated from pestalofone A by the short-chain dehydrogenase/reductase iacC. Iso-A82775C is further condensed with maldoxin via a Diels-Alder reaction to produce the anticancer natural products chloropestolides A to E. The sequence is that of Short-chain dehydrogenase/reductase iacG from Pestalotiopsis fici (strain W106-1 / CGMCC3.15140).